Reading from the N-terminus, the 132-residue chain is Interferon-induced transmembrane protein 5 (132 aa).

The segment covering 1–11 has biased composition (basic and acidic residues); that stretch reads MDTAYPREDTR. A disordered region spans residues 1–21; the sequence is MDTAYPREDTRAPTPSKAGAH. Residues 1-36 are Extracellular-facing; that stretch reads MDTAYPREDTRAPTPSKAGAHTALTLGAPHPPPRDH. Residues 37–57 form a helical membrane-spanning segment; that stretch reads LIWSVFSTLYLNLCCLGFLAL. S-palmitoyl cysteine attachment occurs at residues Cys50, Cys51, and Cys84. Residues 58–86 lie on the Cytoplasmic side of the membrane; the sequence is AYSIKARDQKVVGDLEAARRFGSKAKCYN. Residues 87–107 traverse the membrane as a helical segment; it reads ILAAMWTLVPPLLLLGLVVTG. At 108 to 132 the chain is on the extracellular side; the sequence is ALHLARLAKDSAAFFSTKFDDADYD.

The protein belongs to the CD225/Dispanin family. In terms of assembly, interacts with FKBP11. In terms of processing, palmitoylated. As to expression, detected in osteoblasts and fibroblasts (at protein level). Detected in bone.

The protein localises to the cell membrane. Its function is as follows. Required for normal bone mineralization. The polypeptide is Interferon-induced transmembrane protein 5 (IFITM5) (Homo sapiens (Human)).